The primary structure comprises 407 residues: MTYPNLLDRFLTYVKVNTRSDEHSTTTPSTQSQVDFATNVLIPEMKRVGLQNVYYLPNGFAIGTLPANDPSLTRKIGFISHMDTADFNAEGVNPQVIENYDGGVIELGNSGFKLDPADFKSLEKYPGQTLITTDGTTLLGADDKSGIAEIMTAIEYLTAHPEIKHCEIRVGFGPDEEIGVGANKFDAEDFDVDFAYTVDGGPLGELQYETFSAAGAELHFQGRNVHPGTAKGQMVNALQLAIDFHNQLPENDRPELTEGYQGFYHLMDVTGSVEEARASYIIRDFEKDAFEARKASMQSIADKMNEELGSNRVTLNLTDQYYNMKEVIEKDMTPITVAKAVMEDLGITPIIEPIRGGTDGSKISFMGIPTPNIFAGGENMHGRFEYVSLQTMERAVDTIIGIVAYKG.

His81 is a Zn(2+) binding site. Asp83 is an active-site residue. Asp142 is a Zn(2+) binding site. Glu176 (proton acceptor) is an active-site residue. The Zn(2+) site is built by Glu177, Asp199, and His381.

It belongs to the peptidase M20B family. Zn(2+) is required as a cofactor.

The protein resides in the cytoplasm. The enzyme catalyses Release of the N-terminal residue from a tripeptide.. Functionally, cleaves the N-terminal amino acid of tripeptides. The sequence is that of Peptidase T from Streptococcus pneumoniae (strain Hungary19A-6).